The primary structure comprises 139 residues: Putative pre-16S rRNA nuclease (139 aa).

The protein belongs to the YqgF nuclease family.

Its subcellular location is the cytoplasm. Functionally, could be a nuclease involved in processing of the 5'-end of pre-16S rRNA. The sequence is that of Putative pre-16S rRNA nuclease from Streptococcus equi subsp. equi (strain 4047).